The following is an 87-amino-acid chain: Small ribosomal subunit protein bS20 (87 aa).

The protein belongs to the bacterial ribosomal protein bS20 family.

Binds directly to 16S ribosomal RNA. The polypeptide is Small ribosomal subunit protein bS20 (Corynebacterium jeikeium (strain K411)).